The following is a 295-amino-acid chain: Autophagy-related protein 37 (295 aa).

An ACB domain is found at 5–103 (VDRVFVHALN…LIDTMHRYAT (99 aa)). Disordered stretches follow at residues 124–162 (NSPS…PLKE) and 174–201 (LRSQ…RWQR). A compositionally biased stretch (low complexity) spans 125–153 (SPSSSLSSPRPNQSTGAGAQQPQQEPEQA). N-linked (GlcNAc...) asparagine glycosylation is present at N136. The chain crosses the membrane as a helical span at residues 244–264 (WLLVKHIFADLVILSVVLLWL).

It belongs to the ATG37 family.

It localises to the peroxisome membrane. Acyl-CoA binding protein which acts as the peroxisome receptor for pexophagy. Required for both micropexophagy and macropexophagy, but not for the cytoplasm to vacuole transport (Cvt) or autophagy pathways. Required for functional micropexophagic apparatus (MIPA) and relocation of ATG11 to the peroxisome-sequestering arms of the vacuole. Binds palmitoyl-CoA but not oleyl-CoA. The chain is Autophagy-related protein 37 from Gibberella zeae (strain ATCC MYA-4620 / CBS 123657 / FGSC 9075 / NRRL 31084 / PH-1) (Wheat head blight fungus).